The chain runs to 344 residues: Arginine N-succinyltransferase (344 aa).

L125 provides a ligand contact to succinyl-CoA. Residue H229 is the Proton donor of the active site.

The protein belongs to the arginine N-succinyltransferase family.

It catalyses the reaction succinyl-CoA + L-arginine = N(2)-succinyl-L-arginine + CoA + H(+). It participates in amino-acid degradation; L-arginine degradation via AST pathway; L-glutamate and succinate from L-arginine: step 1/5. Its function is as follows. Catalyzes the transfer of succinyl-CoA to arginine to produce N(2)-succinylarginine. This chain is Arginine N-succinyltransferase, found in Escherichia coli O6:K15:H31 (strain 536 / UPEC).